A 1189-amino-acid chain; its full sequence is Pumilio homolog 1 (1189 aa).

N-acetylserine is present on S2. The residue at position 19 (S19) is a Phosphoserine. A disordered region spans residues 22–73 (LKHHPQEPANPNMPVVLTSGTGSQAQPQPAANQALAAGTHSSPVPGSIGVAG). The span at 45-58 (QAQPQPAANQALAA) shows a compositional bias: low complexity. Phosphoserine occurs at positions 75, 98, and 106. Phosphothreonine is present on T112. Phosphoserine occurs at positions 124, 159, 197, 209, and 229. Positions 233 to 272 (SCLRKGGFGPRDADSDENDKGEKKNKGTFDGDKLGDLKEE) are disordered. A compositionally biased stretch (basic and acidic residues) spans 250–272 (NDKGEKKNKGTFDGDKLGDLKEE). S305 is modified (phosphoserine). Residues 491 to 503 (QQSAPQAQQGQQQ) are compositionally biased toward low complexity. Disordered regions lie at residues 491 to 525 (QQSA…GQQT) and 614 to 647 (AGTT…SSFY). The segment covering 512–525 (RPLTPNQNQQGQQT) has biased composition (polar residues). Phosphothreonine is present on T515. Low complexity predominate over residues 627-647 (QQPQPQPQQQPSNNLASSSFY). A phosphoserine mark is found at S710 and S715. The interval 743 to 773 (GPVGMPLPSQGPGHSQTPPPSLSSHGSSSSL) is disordered. Residues 764–773 (LSSHGSSSSL) are compositionally biased toward low complexity. Position 797 is an omega-N-methylarginine (R797). S807 and S823 each carry phosphoserine. The 343-residue stretch at 829–1171 (GRSRLLEDFR…HILAKLEKYY (343 aa)) folds into the PUM-HD domain. Pumilio repeat units follow at residues 849-884 (EIAG…LVFN), 885-920 (EILQ…ALAE), 921-958 (RIRG…EMVR), 959-994 (ELDG…FIID), 995-1030 (AFKG…PILE), 1031-1066 (ELHQ…KIVA), 1067-1102 (EIRG…VLID), and 1106-1145 (TMND…IVMH). The interval 864–868 (SRFIQ) is adenine-nucleotide binding in RNA target. Residues 900–904 (NYVIQ) form a uracil-nucleotide binding in RNA target region. Residues 936 to 940 (CRVIQ) are adenine-nucleotide binding in RNA target. The non-specific-nucleotide binding in RNA target stretch occupies residues 974–978 (NHVVQ). The interval 1010 to 1014 (CRVIQ) is adenine-nucleotide binding in RNA target. Residues 1046–1050 (NYVIQ) form a uracil-nucleotide binding in RNA target region. Guanine-nucleotide binding in RNA target stretches follow at residues 1082–1086 (SNVVE) and 1083–1086 (NVVE). Positions 1125–1129 (NYVVQ) are uracil-nucleotide binding in RNA target.

As to quaternary structure, recruits the CCR4-POP2-NOT deadenylase leading to translational inhibition and mRNA degradation. Interacts with TRIM71 (via NHL repeats) in an RNA-dependent manner. Phosphorylation at Ser-715 promotes RNA-binding activity. Following growth factor stimulation phosphorylated at Ser-715, promoting binding to the 3'-UTR of CDKN1B/p27 mRNA. In terms of tissue distribution, widely expressed. Expressed in brain, heart, kidney, liver, lung, skin, intestine, spleen, testis and thymus. Weakly or not expressed in muscles and stomach. Expressed at various stages of myeloid and lymphoid cell development. Highly expressed in testis. Expressed in all major brain regions (at protein level).

It localises to the cytoplasm. It is found in the P-body. The protein resides in the cytoplasmic granule. Sequence-specific RNA-binding protein that acts as a post-transcriptional repressor by binding the 3'-UTR of mRNA targets. Binds to an RNA consensus sequence, the Pumilio Response Element (PRE), 5'-UGUANAUA-3', that is related to the Nanos Response Element (NRE). Mediates post-transcriptional repression of transcripts via different mechanisms: acts via direct recruitment of the CCR4-POP2-NOT deadenylase leading to translational inhibition and mRNA degradation. Also mediates deadenylation-independent repression by promoting accessibility of miRNAs. Following growth factor stimulation, phosphorylated and binds to the 3'-UTR of CDKN1B/p27 mRNA, inducing a local conformational change that exposes miRNA-binding sites, promoting association of miR-221 and miR-222, efficient suppression of CDKN1B/p27 expression, and rapid entry to the cell cycle. Acts as a post-transcriptional repressor of E2F3 mRNAs by binding to its 3'-UTR and facilitating miRNA regulation. Represses a program of genes necessary to maintain genomic stability such as key mitotic, DNA repair and DNA replication factors. Its ability to repress those target mRNAs is regulated by the lncRNA NORAD (non-coding RNA activated by DNA damage) which, due to its high abundance and multitude of PUMILIO binding sites, is able to sequester a significant fraction of PUM1 and PUM2 in the cytoplasm. Involved in neuronal functions by regulating ATXN1 mRNA levels: acts by binding to the 3'-UTR of ATXN1 transcripts, leading to their down-regulation independently of the miRNA machinery. In testis, acts as a post-transcriptional regulator of spermatogenesis by binding to the 3'-UTR of mRNAs coding for regulators of p53/TP53. Involved in embryonic stem cell renewal by facilitating the exit from the ground state: acts by targeting mRNAs coding for naive pluripotency transcription factors and accelerates their down-regulation at the onset of differentiation. Binds specifically to miRNA MIR199A precursor, with PUM2, regulates miRNA MIR199A expression at a postranscriptional level. The sequence is that of Pumilio homolog 1 from Mus musculus (Mouse).